A 442-amino-acid polypeptide reads, in one-letter code: Protein PhoH2 (442 aa).

The PINc domain occupies 3–135 (KIYVLDTNVL…LVSKDVLVRV (133 aa)). 259–266 (GKAGTGKT) serves as a coordination point for ATP.

The protein in the N-terminal section; belongs to the PINc/VapC protein family. It in the C-terminal section; belongs to the PhoH family.

The enzyme catalyses n ATP + n H2O + wound RNA = n ADP + n phosphate + unwound RNA.. It carries out the reaction ATP + H2O = ADP + phosphate + H(+). The catalysed reaction is GTP + H2O = GDP + phosphate + H(+). Functionally, unwinds and/or cleaves 5'-tailed RNA in vitro. Has ATPase and GTPase activities. Unlike the protein in mycobacteria there does not seem to be an antitoxin gene upstream, suggesting this is not a toxin-antitoxin system. The chain is Protein PhoH2 from Bacillus subtilis (strain 168).